The sequence spans 340 residues: Spermidine synthase 2 (340 aa).

The disordered stretch occupies residues M1–P41. An N-acetylserine modification is found at S2. The PABS domain maps to P49–S286. An S-adenosyl 3-(methylsulfanyl)propylamine-binding site is contributed by Q80. Putrescine is bound at residue Y110. S-adenosyl 3-(methylsulfanyl)propylamine contacts are provided by residues Q111, D135, E155, D186 to G187, and D205. The active-site Proton acceptor is D205. Residues D205–D208 and Y274 contribute to the putrescine site.

This sequence belongs to the spermidine/spermine synthase family. In terms of assembly, heterodimer. Component of a multiprotein complex. Interacts with SPMS and SPDSYN1.

It carries out the reaction S-adenosyl 3-(methylsulfanyl)propylamine + putrescine = S-methyl-5'-thioadenosine + spermidine + H(+). Its pathway is amine and polyamine biosynthesis; spermidine biosynthesis; spermidine from putrescine: step 1/1. This is Spermidine synthase 2 (SPDSYN2) from Arabidopsis thaliana (Mouse-ear cress).